Here is a 120-residue protein sequence, read N- to C-terminus: MNATFLNHSGLEEVDGVGGGAGAALGNRTHGLGTWLGCCPGGAPLAASDGVPAGLAPDERSLWVSRVAQIAVLCVLSLTVVFGVFFLGCNLLIKSESMINFLVQERRPSKDVGAAILGLY.

Residues 67 to 87 (VAQIAVLCVLSLTVVFGVFFL) form a helical membrane-spanning segment. Ser109 carries the post-translational modification Phosphoserine.

Belongs to the reprimo family.

It localises to the membrane. This Homo sapiens (Human) protein is Reprimo-like protein (RPRML).